The chain runs to 576 residues: DNA mismatch repair protein MutL (576 aa).

This sequence belongs to the DNA mismatch repair MutL/HexB family.

Its function is as follows. This protein is involved in the repair of mismatches in DNA. It is required for dam-dependent methyl-directed DNA mismatch repair. May act as a 'molecular matchmaker', a protein that promotes the formation of a stable complex between two or more DNA-binding proteins in an ATP-dependent manner without itself being part of a final effector complex. This Chlamydia trachomatis serovar L2 (strain ATCC VR-902B / DSM 19102 / 434/Bu) protein is DNA mismatch repair protein MutL.